The primary structure comprises 1678 residues: Clathrin heavy chain (1678 aa).

7 WD40-like repeat regions span residues 24–67, 68–107, 108–149, 150–195, 196–257, 258–301, and 302–330; these read SFSF…RPIS, ADSA…MNED, VVFW…SSLN, GCQI…QAIE, GHAA…PEAQ, NDFP…ISAD, and TIFV…VTVD. 7 CHCR repeats span residues 538-684, 687-829, 834-973, 980-1125, 1129-1270, 1275-1421, and 1424-1567; these read VAEE…QICV, ATKY…SEDI, ILVV…QLID, LSET…VKEA, YIKA…FRLA, LHIV…LLLN, and LLVL…YDCF. The segment at 1334–1643 is involved in binding clathrin light chain; the sequence is REHLELFWSR…IQMEPQLMIT (310 aa). A trimerization region spans residues 1552 to 1677; the sequence is EELLGWFLER…AGGRNMGYPY (126 aa).

The protein belongs to the clathrin heavy chain family. Clathrin triskelions, composed of 3 heavy chains and 3 light chains, are the basic subunits of the clathrin coat. Interacts with sau.

It localises to the cytoplasmic vesicle membrane. It is found in the membrane. The protein resides in the coated pit. Functionally, clathrin is the major protein of the polyhedral coat of coated pits and vesicles. This is Clathrin heavy chain (Chc) from Drosophila melanogaster (Fruit fly).